The following is a 359-amino-acid chain: Stearoyl-CoA desaturase (359 aa).

Residues 1 to 72 (MPAHLLQEEI…EGPRPKLEYV (72 aa)) lie on the Cytoplasmic side of the membrane. Residues 73-93 (WRNIILMSLLHLGALYGIILI) traverse the membrane as a helical segment. Asparagine 75 provides a ligand contact to substrate. The Lumenal segment spans residues 94 to 97 (PTCK). Residues 98 to 118 (IYTLLWAFAYYLLSAVGVTAG) form a helical membrane-spanning segment. Topologically, residues 119 to 217 (AHRLWSHRTY…EKLVMFQRRY (99 aa)) are cytoplasmic. The Fe cation site is built by histidine 120 and histidine 125. Residues 120 to 125 (HRLWSH) carry the Histidine box-1 motif. Substrate contacts are provided by asparagine 148, arginine 155, and aspartate 156. Fe cation is bound by residues histidine 157, histidine 160, and histidine 161. The Histidine box-2 signature appears at 157–161 (HRAHH). Substrate-binding residues include arginine 188 and lysine 189. Serine 203 carries the phosphoserine modification. Residues 218-237 (YKPGILLMCFILPTIVPWYC) traverse the membrane as a helical segment. The Lumenal portion of the chain corresponds to 238–241 (WGEA). Residues 242–263 (FPQSLFVATFLRYAIVLNATWL) traverse the membrane as a helical segment. Tryptophan 262 is a substrate binding site. Residues 264 to 359 (VNSAAHLYGY…RTGDESYKSG (96 aa)) are Cytoplasmic-facing. Fe cation is bound by residues histidine 269, histidine 298, histidine 301, and histidine 302. Positions 298 to 302 (HNYHH) match the Histidine box-3 motif.

This sequence belongs to the fatty acid desaturase type 1 family. The cofactor is Fe(2+).

The protein resides in the endoplasmic reticulum membrane. The enzyme catalyses octadecanoyl-CoA + 2 Fe(II)-[cytochrome b5] + O2 + 2 H(+) = (9Z)-octadecenoyl-CoA + 2 Fe(III)-[cytochrome b5] + 2 H2O. It catalyses the reaction hexadecanoyl-CoA + 2 Fe(II)-[cytochrome b5] + O2 + 2 H(+) = (9Z)-hexadecenoyl-CoA + 2 Fe(III)-[cytochrome b5] + 2 H2O. Stearoyl-CoA desaturase that utilizes O(2) and electrons from reduced cytochrome b5 to introduce the first double bond into saturated fatty acyl-CoA substrates. Catalyzes the insertion of a cis double bond at the delta-9 position into fatty acyl-CoA substrates including palmitoyl-CoA and stearoyl-CoA. Gives rise to a mixture of 16:1 and 18:1 unsaturated fatty acids. Plays an important role in lipid biosynthesis. Plays an important role in regulating the expression of genes that are involved in lipogenesis and in regulating mitochondrial fatty acid oxidation. Plays an important role in body energy homeostasis. Contributes to the biosynthesis of membrane phospholipids, cholesterol esters and triglycerides. In Sus scrofa (Pig), this protein is Stearoyl-CoA desaturase (SCD).